The sequence spans 266 residues: NAD kinase 2 (266 aa).

Aspartate 51 (proton acceptor) is an active-site residue. NAD(+) is bound by residues 51–52 (DG), 123–124 (NE), arginine 150, aspartate 152, 163–168 (TGYSKS), and alanine 187.

Belongs to the NAD kinase family. A divalent metal cation is required as a cofactor.

The protein resides in the cytoplasm. The catalysed reaction is NAD(+) + ATP = ADP + NADP(+) + H(+). In terms of biological role, involved in the regulation of the intracellular balance of NAD and NADP, and is a key enzyme in the biosynthesis of NADP. Catalyzes specifically the phosphorylation on 2'-hydroxyl of the adenosine moiety of NAD to yield NADP. The chain is NAD kinase 2 from Oceanobacillus iheyensis (strain DSM 14371 / CIP 107618 / JCM 11309 / KCTC 3954 / HTE831).